The chain runs to 126 residues: Holo-[acyl-carrier-protein] synthase (126 aa).

2 residues coordinate Mg(2+): D9 and E58.

This sequence belongs to the P-Pant transferase superfamily. AcpS family. In terms of assembly, homodimer. Requires Mg(2+) as cofactor.

Its subcellular location is the cytoplasm. It catalyses the reaction apo-[ACP] + CoA = holo-[ACP] + adenosine 3',5'-bisphosphate + H(+). Transfers the 4'-phosphopantetheine moiety from coenzyme A to the 'Ser-36' of acyl-carrier-protein. The polypeptide is Holo-[acyl-carrier-protein] synthase (Escherichia coli O157:H7).